The following is a 502-amino-acid chain: Mitochondrial fusion and transport protein UGO1 (502 aa).

N-acetylmethionine is present on Met-1. At 1-293 (MNNNNVTEAT…VINSPDISKS (293 aa)) the chain is on the cytoplasmic side. A binds FZO1 region spans residues 1–294 (MNNNNVTEAT…INSPDISKSF (294 aa)). One copy of the Solcar repeat lies at 288–383 (PDISKSFILA…NSFFNKLFDL (96 aa)). A helical; Signal-anchor for type II membrane protein transmembrane segment spans residues 294-314 (FILALGAGVFTSIILLPVDLI). A binds MGM1 region spans residues 312–502 (DLIRTRLIVT…VDINMEQEKF (191 aa)). Residues 315–502 (RTRLIVTSFK…VDINMEQEKF (188 aa)) lie on the Mitochondrial intermembrane side of the membrane.

As to quaternary structure, interacts with FZO1 through its cytoplasmic domain and with MGM1 through its mitochondrial intermembrane space domain.

Its subcellular location is the mitochondrion outer membrane. In terms of biological role, required for mitochondrial fusion as well as normal mitochondrial morphology by bridging the essential interaction between FZO1 and MGM1. May coordinate fusion of inner and outer membranes during mitochondrial fusion. The polypeptide is Mitochondrial fusion and transport protein UGO1 (Saccharomyces cerevisiae (strain ATCC 204508 / S288c) (Baker's yeast)).